Here is a 59-residue protein sequence, read N- to C-terminus: U-actitoxin-Aer2b (59 aa).

In terms of processing, contains 5 disulfide bonds.

It is found in the secreted. The protein localises to the nematocyst. This Anemonia erythraea (Sea anemone) protein is U-actitoxin-Aer2b.